Here is a 123-residue protein sequence, read N- to C-terminus: Large ribosomal subunit protein bL12 (123 aa).

This sequence belongs to the bacterial ribosomal protein bL12 family. In terms of assembly, homodimer. Part of the ribosomal stalk of the 50S ribosomal subunit. Forms a multimeric L10(L12)X complex, where L10 forms an elongated spine to which 2 to 4 L12 dimers bind in a sequential fashion. Binds GTP-bound translation factors.

In terms of biological role, forms part of the ribosomal stalk which helps the ribosome interact with GTP-bound translation factors. Is thus essential for accurate translation. The chain is Large ribosomal subunit protein bL12 from Bartonella tribocorum (strain CIP 105476 / IBS 506).